A 391-amino-acid chain; its full sequence is Pectin acetylesterase 11 (391 aa).

An N-terminal signal peptide occupies residues M1–A23. Residues S171, D267, and H334 each act as charge relay system in the active site.

This sequence belongs to the pectinacetylesterase family.

The protein localises to the secreted. It is found in the cell wall. Its function is as follows. Hydrolyzes acetyl esters in homogalacturonan regions of pectin. In type I primary cell wall, galacturonic acid residues of pectin can be acetylated at the O-2 and O-3 positions. Decreasing the degree of acetylation of pectin gels in vitro alters their physical properties. In Arabidopsis thaliana (Mouse-ear cress), this protein is Pectin acetylesterase 11.